The primary structure comprises 245 residues: 1-(5-phosphoribosyl)-5-[(5-phosphoribosylamino)methylideneamino] imidazole-4-carboxamide isomerase (245 aa).

The active-site Proton acceptor is the aspartate 11. Aspartate 132 acts as the Proton donor in catalysis.

This sequence belongs to the HisA/HisF family.

The protein resides in the cytoplasm. It carries out the reaction 1-(5-phospho-beta-D-ribosyl)-5-[(5-phospho-beta-D-ribosylamino)methylideneamino]imidazole-4-carboxamide = 5-[(5-phospho-1-deoxy-D-ribulos-1-ylimino)methylamino]-1-(5-phospho-beta-D-ribosyl)imidazole-4-carboxamide. It participates in amino-acid biosynthesis; L-histidine biosynthesis; L-histidine from 5-phospho-alpha-D-ribose 1-diphosphate: step 4/9. The sequence is that of 1-(5-phosphoribosyl)-5-[(5-phosphoribosylamino)methylideneamino] imidazole-4-carboxamide isomerase from Geobacillus kaustophilus (strain HTA426).